Here is a 163-residue protein sequence, read N- to C-terminus: uncharacterized protein (163 aa).

The span at 1–10 (MGVPRAREGR) shows a compositional bias: basic and acidic residues. The segment at 1 to 163 (MGVPRAREGR…WSFTPLRWGS (163 aa)) is disordered.

This is an uncharacterized protein from Homo sapiens (Human).